Reading from the N-terminus, the 70-residue chain is Brevinin-1Vb (70 aa).

A signal peptide spans 1–22 (MFTLKKSLLLLFFLGTINLSLC). The propeptide occupies 23–44 (EEERNAEEERRDEPDEMNVEVE). A disulfide bridge links cysteine 64 with cysteine 70.

As to expression, expressed by the skin glands.

It localises to the secreted. Functionally, antimicrobial peptide. This is Brevinin-1Vb from Odorrana versabilis (Chinese bamboo leaf odorous frog).